The following is a 351-amino-acid chain: Prostaglandin reductase 2 (351 aa).

99–100 (FY) lines the substrate pocket. NADP(+) is bound by residues 165–168 (GACG), K192, Y208, N231, 253–259 (CGQISQY), 287–289 (FMV), and N337. 288–290 (MVL) lines the substrate pocket.

This sequence belongs to the NADP-dependent oxidoreductase L4BD family. As to quaternary structure, monomer.

It localises to the cytoplasm. The enzyme catalyses 13,14-dihydro-15-oxo-prostaglandin E2 + NAD(+) = 15-oxoprostaglandin E2 + NADH + H(+). It carries out the reaction 13,14-dihydro-15-oxo-prostaglandin E2 + NADP(+) = 15-oxoprostaglandin E2 + NADPH + H(+). The catalysed reaction is 13,14-dihydro-15-oxo-PGF2alpha + NADP(+) = 15-oxoprostaglandin F2alpha + NADPH + H(+). It catalyses the reaction 13,14-dihydro-15-oxo-prostaglandin E1 + NADP(+) = 15-oxoprostaglandin E1 + NADPH + H(+). The enzyme catalyses 13,14-dihydro-15-oxo-prostaglandin F1alpha + NADP(+) = 15-oxoprostaglandin F1alpha + NADPH + H(+). In terms of biological role, functions as 15-oxo-prostaglandin 13-reductase and acts on 15-keto-PGE1, 15-keto-PGE2, 15-keto-PGE1-alpha and 15-keto-PGE2-alpha with highest activity towards 15-keto-PGE2. Overexpression represses transcriptional activity of PPARG and inhibits adipocyte differentiation. The polypeptide is Prostaglandin reductase 2 (Rattus norvegicus (Rat)).